The chain runs to 252 residues: Cell division protein ZapD (252 aa).

This sequence belongs to the ZapD family. Interacts with FtsZ.

It is found in the cytoplasm. Cell division factor that enhances FtsZ-ring assembly. Directly interacts with FtsZ and promotes bundling of FtsZ protofilaments, with a reduction in FtsZ GTPase activity. The protein is Cell division protein ZapD of Chromobacterium violaceum (strain ATCC 12472 / DSM 30191 / JCM 1249 / CCUG 213 / NBRC 12614 / NCIMB 9131 / NCTC 9757 / MK).